The following is a 216-amino-acid chain: Probable GTP-binding protein EngB (216 aa).

In terms of domain architecture, EngB-type G spans 37-214 (GSVEIAFAGR…RAAMIRLLDE (178 aa)). GTP-binding positions include 45-52 (GRSNVGKS), 72-76 (GRTQE), 92-95 (DMPG), 159-162 (TKAD), and 193-195 (TSS). Mg(2+) contacts are provided by Ser52 and Thr74.

Belongs to the TRAFAC class TrmE-Era-EngA-EngB-Septin-like GTPase superfamily. EngB GTPase family. The cofactor is Mg(2+).

Necessary for normal cell division and for the maintenance of normal septation. The chain is Probable GTP-binding protein EngB from Rhodopseudomonas palustris (strain ATCC BAA-98 / CGA009).